The sequence spans 198 residues: Small ribosomal subunit protein uS11 (198 aa).

2 stretches are compositionally biased toward low complexity: residues 1 to 11 (MSGTEAGAGEP) and 19 to 58 (EAAQ…TAQP). Disordered regions lie at residues 1–72 (MSGT…TPAD) and 178–198 (DVTP…GRRV). Over residues 187 to 198 (TRKKGGKRGRRV) the composition is skewed to basic residues.

It belongs to the universal ribosomal protein uS11 family. Part of the 30S ribosomal subunit.

Located on the platform of the 30S subunit. The sequence is that of Small ribosomal subunit protein uS11 from Cenarchaeum symbiosum (strain A).